A 31-amino-acid chain; its full sequence is Cyclotide mra3 (31 aa).

Disulfide bonds link C5-C21, C9-C23, and C14-C28.

In terms of processing, this is a cyclic peptide. Contains 3 disulfide bonds.

Probably participates in a plant defense mechanism. This chain is Cyclotide mra3, found in Melicytus ramiflorus (Whitey wood).